A 108-amino-acid polypeptide reads, in one-letter code: UPF0145 protein HDEF_1024 (108 aa).

This sequence belongs to the UPF0145 family.

In Hamiltonella defensa subsp. Acyrthosiphon pisum (strain 5AT), this protein is UPF0145 protein HDEF_1024.